The primary structure comprises 427 residues: Enolase (427 aa).

Gln-164 is a (2R)-2-phosphoglycerate binding site. Residue Glu-206 is the Proton donor of the active site. The Mg(2+) site is built by Asp-243, Glu-284, and Asp-311. (2R)-2-phosphoglycerate is bound by residues Lys-336, Arg-365, Ser-366, and Lys-387. The active-site Proton acceptor is Lys-336.

This sequence belongs to the enolase family. The cofactor is Mg(2+).

The protein localises to the cytoplasm. It is found in the secreted. Its subcellular location is the cell surface. It catalyses the reaction (2R)-2-phosphoglycerate = phosphoenolpyruvate + H2O. It functions in the pathway carbohydrate degradation; glycolysis; pyruvate from D-glyceraldehyde 3-phosphate: step 4/5. Catalyzes the reversible conversion of 2-phosphoglycerate (2-PG) into phosphoenolpyruvate (PEP). It is essential for the degradation of carbohydrates via glycolysis. In Synechococcus sp. (strain JA-2-3B'a(2-13)) (Cyanobacteria bacterium Yellowstone B-Prime), this protein is Enolase.